The following is a 351-amino-acid chain: Putative F-box protein At5g52610 (351 aa).

The F-box domain maps to 1 to 41 (MISEDLLVEILLRLPVKPLARCLCVCKLWATIIRSRYFINL).

This chain is Putative F-box protein At5g52610, found in Arabidopsis thaliana (Mouse-ear cress).